A 365-amino-acid polypeptide reads, in one-letter code: UDP-N-acetylglucosamine--N-acetylmuramyl-(pentapeptide) pyrophosphoryl-undecaprenol N-acetylglucosamine transferase (365 aa).

Residues 17 to 19 (TGG), Asn-129, Arg-167, Ser-194, Ile-250, 269 to 274 (ALTVSE), and Gln-295 contribute to the UDP-N-acetyl-alpha-D-glucosamine site.

The protein belongs to the glycosyltransferase 28 family. MurG subfamily.

It is found in the cell inner membrane. It carries out the reaction di-trans,octa-cis-undecaprenyl diphospho-N-acetyl-alpha-D-muramoyl-L-alanyl-D-glutamyl-meso-2,6-diaminopimeloyl-D-alanyl-D-alanine + UDP-N-acetyl-alpha-D-glucosamine = di-trans,octa-cis-undecaprenyl diphospho-[N-acetyl-alpha-D-glucosaminyl-(1-&gt;4)]-N-acetyl-alpha-D-muramoyl-L-alanyl-D-glutamyl-meso-2,6-diaminopimeloyl-D-alanyl-D-alanine + UDP + H(+). It participates in cell wall biogenesis; peptidoglycan biosynthesis. In terms of biological role, cell wall formation. Catalyzes the transfer of a GlcNAc subunit on undecaprenyl-pyrophosphoryl-MurNAc-pentapeptide (lipid intermediate I) to form undecaprenyl-pyrophosphoryl-MurNAc-(pentapeptide)GlcNAc (lipid intermediate II). The chain is UDP-N-acetylglucosamine--N-acetylmuramyl-(pentapeptide) pyrophosphoryl-undecaprenol N-acetylglucosamine transferase from Shewanella woodyi (strain ATCC 51908 / MS32).